Here is a 1124-residue protein sequence, read N- to C-terminus: Phytochrome A (1124 aa).

The span at 1-19 shows a compositional bias: low complexity; it reads MSTTRPSQSSNNSGRSRNS. Positions 1-21 are disordered; it reads MSTTRPSQSSNNSGRSRNSAR. The region spanning 218–401 is the GAF domain; the sequence is SMERLCDTMV…VFAIHVNKEI (184 aa). Cys-323 is a binding site for phytochromobilin. 2 consecutive PAS domains span residues 617–687 and 750–821; these read VTSE…LQGE and DYKA…VNFG. One can recognise a Histidine kinase domain in the interval 901–1120; that stretch reads YMKRQIRNPL…ILSVELAAAH (220 aa).

Belongs to the phytochrome family. As to quaternary structure, homodimer. Contains one covalently linked phytochromobilin chromophore.

Regulatory photoreceptor which exists in two forms that are reversibly interconvertible by light: the Pr form that absorbs maximally in the red region of the spectrum and the Pfr form that absorbs maximally in the far-red region. Photoconversion of Pr to Pfr induces an array of morphogenic responses, whereas reconversion of Pfr to Pr cancels the induction of those responses. Pfr controls the expression of a number of nuclear genes including those encoding the small subunit of ribulose-bisphosphate carboxylase, chlorophyll A/B binding protein, protochlorophyllide reductase, rRNA, etc. It also controls the expression of its own gene(s) in a negative feedback fashion. The polypeptide is Phytochrome A (PHYA) (Pisum sativum (Garden pea)).